A 156-amino-acid chain; its full sequence is Small ribosomal subunit protein uS7 (156 aa).

It belongs to the universal ribosomal protein uS7 family. As to quaternary structure, part of the 30S ribosomal subunit. Contacts proteins S9 and S11.

Functionally, one of the primary rRNA binding proteins, it binds directly to 16S rRNA where it nucleates assembly of the head domain of the 30S subunit. Is located at the subunit interface close to the decoding center, probably blocks exit of the E-site tRNA. The sequence is that of Small ribosomal subunit protein uS7 from Staphylococcus saprophyticus subsp. saprophyticus (strain ATCC 15305 / DSM 20229 / NCIMB 8711 / NCTC 7292 / S-41).